Here is a 192-residue protein sequence, read N- to C-terminus: Holliday junction branch migration complex subunit RuvA (192 aa).

Residues 1 to 61 (MFEYLKGIVT…DTGITLYGFL (61 aa)) are domain I. The segment at 62-137 (SLEDKELFLK…KLGDYVKKST (76 aa)) is domain II. Residues 137–140 (TAAA) are flexible linker. Residues 141 to 192 (DLTPSLQDALLALVALGYTQKEVDRITPKLAKLPENTADGYVKEALALLLKK) are domain III.

This sequence belongs to the RuvA family. Homotetramer. Forms an RuvA(8)-RuvB(12)-Holliday junction (HJ) complex. HJ DNA is sandwiched between 2 RuvA tetramers; dsDNA enters through RuvA and exits via RuvB. An RuvB hexamer assembles on each DNA strand where it exits the tetramer. Each RuvB hexamer is contacted by two RuvA subunits (via domain III) on 2 adjacent RuvB subunits; this complex drives branch migration. In the full resolvosome a probable DNA-RuvA(4)-RuvB(12)-RuvC(2) complex forms which resolves the HJ.

The protein resides in the cytoplasm. Its function is as follows. The RuvA-RuvB-RuvC complex processes Holliday junction (HJ) DNA during genetic recombination and DNA repair, while the RuvA-RuvB complex plays an important role in the rescue of blocked DNA replication forks via replication fork reversal (RFR). RuvA specifically binds to HJ cruciform DNA, conferring on it an open structure. The RuvB hexamer acts as an ATP-dependent pump, pulling dsDNA into and through the RuvAB complex. HJ branch migration allows RuvC to scan DNA until it finds its consensus sequence, where it cleaves and resolves the cruciform DNA. The polypeptide is Holliday junction branch migration complex subunit RuvA (Lactobacillus johnsonii (strain CNCM I-12250 / La1 / NCC 533)).